A 153-amino-acid chain; its full sequence is MTTKGTPSRRAARALAFQILYGLGFSPAASVKQLREAYASSPDVADKGRSPQPEGFAWELIEGIWTEQANIDEVIGLFSQNWRIDRIGRVELTLLRIAVYEMLYRIDVPPKVAINEALELSKQFGDANARGFINGILDAAAKALEGGQLKPRV.

This sequence belongs to the NusB family.

In terms of biological role, involved in transcription antitermination. Required for transcription of ribosomal RNA (rRNA) genes. Binds specifically to the boxA antiterminator sequence of the ribosomal RNA (rrn) operons. The chain is Transcription antitermination protein NusB from Nitratidesulfovibrio vulgaris (strain ATCC 29579 / DSM 644 / CCUG 34227 / NCIMB 8303 / VKM B-1760 / Hildenborough) (Desulfovibrio vulgaris).